The following is a 394-amino-acid chain: UPF0284 protein SYNW1869 (394 aa).

The protein belongs to the UPF0284 family.

In Parasynechococcus marenigrum (strain WH8102), this protein is UPF0284 protein SYNW1869.